Here is a 240-residue protein sequence, read N- to C-terminus: Probable transcriptional regulatory protein MS53_0373 (240 aa).

This sequence belongs to the TACO1 family.

The protein localises to the cytoplasm. The polypeptide is Probable transcriptional regulatory protein MS53_0373 (Mycoplasmopsis synoviae (strain 53) (Mycoplasma synoviae)).